A 740-amino-acid polypeptide reads, in one-letter code: MAAFSEMGVMPEIAQAVEEMDWLLPTDIQAESIPLILGGGDVLMAAETGSGKTGAFSIPVIQIVYETLKDQQEGKKGKTTIKTGASVLNKWQMNPYDRGSAFAIGSDGLCCQSREVKEWHGCRATKGLMKGKHYYEVSCHDQGLCRVGWSTMQASLDLGTDKFGFGFGGTGKKSHNKQFDNYGEEFTMHDTIGCYLDIDKGHVKFSKNGKDLGLAFEIPPHMKNQALFPACVLKNAELKFNFGEEEFKFPPKDGFVALSKAPDGYIVKSQHSGNAQVTQTKFLPNAPKALIVEPSRELAEQTLNNIKQFKKYIDNPKLRELLIIGGVAARDQLSVLENGVDIVVGTPGRLDDLVSTGKLNLSQVRFLVLDEADGLLTQGYSDFINRMHNQIPQVTSDGKRLQVIVCSATLHSFDVKKLSEKIMHFPTWVDLKGEDSVPDTVHHVVVPVNPKTDRLWERLGKNHIRTDDVHAKDNTRPGANSPEMWSEAIKILKGEYAVRAIKEHKMDQAIIFCRTKIDCDNLEQYFMQQGGGPDKKGHQFSCVCLHGDRKPHERKQNLERFKKGDVRFLICTDVAARGIDIHGVPYVINVTLPDEKQNYVHRIGRVGRAERMGLAISLVATEKEKVWYHVCSSRGKGCYNTRLKEDGGCTIWYNEMQLLSEIEEHLNCTISQVEPDIKVPVDEFDGKVTYGQKRAAGGGSYKGHVDILAPTVQELAALEKEAQTSFLHLGYLPNQLFRTF.

Residues 1-295 (MAAFSEMGVM…APKALIVEPS (295 aa)) form a necessary for interaction with HNRNPK region. Residues 1–448 (MAAFSEMGVM…DTVHHVVVPV (448 aa)) are interaction with dsRNA. The tract at residues 1–525 (MAAFSEMGVM…KIDCDNLEQY (525 aa)) is necessary for interaction with RELA. Residues 2-428 (AAFSEMGVMP…SEKIMHFPTW (427 aa)) form the Helicase ATP-binding domain. 46-53 (AETGSGKT) provides a ligand contact to ATP. The B30.2/SPRY domain maps to 70–247 (DQQEGKKGKT…LKFNFGEEEF (178 aa)). 2 positions are modified to N6-acetyllysine: Lys239 and Lys268. Position 281 is an N6-acetyllysine; alternate (Lys281). A Glycyl lysine isopeptide (Lys-Gly) (interchain with G-Cter in SUMO2); alternate cross-link involves residue Lys281. The DEAD box signature appears at 370–373 (DEAD). Position 481 is a phosphoserine (Ser481). A Helicase C-terminal domain is found at 493–681 (KGEYAVRAIK…QVEPDIKVPV (189 aa)). A necessary for interaction with HNRNPK region spans residues 525 to 740 (YFMQQGGGPD…YLPNQLFRTF (216 aa)).

This sequence belongs to the DEAD box helicase family. DDX1 subfamily. Found in a multi-helicase-TICAM1 complex at least composed of DHX36, DDX1, DDX21 and TICAM1; this complex exists in resting cells with or without poly(I:C) RNA ligand stimulation. Interacts with DHX36. Interacts (via B30.2/SPRY domain) with DDX21 (via N-terminus); this interaction serves as bridges to TICAM1. Interacts with FAM98A (via N- and C-terminus). Interacts with PHF5A (via C-terminus). Interacts with MBNL1. Interacts with CSTF2. Interacts with HNRNPK. Interacts with ATM. Interacts with RELA (via C-terminus). Component of the tRNA-splicing ligase complex. Interacts with PQBP1. Interacts with ERCC6. Phosphorylated by ATM kinase; phosphorylation is increased in response to ionizing radiation (IR).

The protein resides in the nucleus. The protein localises to the cytoplasm. It localises to the cytoplasmic granule. It is found in the cytosol. Its subcellular location is the mitochondrion. It catalyses the reaction ATP + H2O = ADP + phosphate + H(+). Functionally, acts as an ATP-dependent RNA helicase, able to unwind both RNA-RNA and RNA-DNA duplexes. Possesses 5' single-stranded RNA overhang nuclease activity. Possesses ATPase activity on various RNA, but not DNA polynucleotides. May play a role in RNA clearance at DNA double-strand breaks (DSBs), thereby facilitating the template-guided repair of transcriptionally active regions of the genome. Together with RELA, acts as a coactivator to enhance NF-kappa-B-mediated transcriptional activation. Acts as a positive transcriptional regulator of cyclin CCND2 expression. Binds to the cyclin CCND2 promoter region. Associates with chromatin at the NF-kappa-B promoter region via association with RELA. Binds to poly(A) RNA. May be involved in 3'-end cleavage and polyadenylation of pre-mRNAs. Component of the tRNA-splicing ligase complex required to facilitate the enzymatic turnover of catalytic subunit RTCB: together with archease (ZBTB8OS), acts by facilitating the guanylylation of RTCB, a key intermediate step in tRNA ligation. Component of a multi-helicase-TICAM1 complex that acts as a cytoplasmic sensor of viral double-stranded RNA (dsRNA) and plays a role in the activation of a cascade of antiviral responses including the induction of pro-inflammatory cytokines via the adapter molecule TICAM1. Specifically binds (via helicase ATP-binding domain) on both short and long poly(I:C) dsRNA. This is ATP-dependent RNA helicase DDX1 (DDX1) from Macaca fascicularis (Crab-eating macaque).